The primary structure comprises 174 residues: RPERCGSAMRKAEAEKCARRNGRFNASKCRCTSAGKPSRNSEPSKGSKPRPEKPSKGSKPRPEKPSKGSKPKPEKPSKGSKPRPERCGSAMRKAEAEKCARRNGRFNASKCRCTSAGKPSRKSEPSKGSKPRPEKPSKESKPRPEKPSKGSKPRPEKPSKGSKPRPEGCGSAMR.

Residues 28-174 are disordered; sequence KCRCTSAGKP…RPEGCGSAMR (147 aa). Tandem repeats lie at residues 42–52, 53–63, 64–74, 75–85, 124–134, 135–145, 146–156, and 157–167. 4 X 11 AA tandem repeats regions lie at residues 42–85 and 124–167; these read EPSK…PRPE. Basic and acidic residues-rich tracts occupy residues 49-100 and 121-159; these read PRPE…EKCA and RKSE…EKPS.

Salivary gland.

It is found in the secreted. Functionally, used by the larvae to construct a supramolecular structure, the larval tube. The polypeptide is Balbiani ring protein 1 (BR1) (Chironomus tentans (Midge)).